The chain runs to 782 residues: Endonuclease MutS2 (782 aa).

336 to 343 (GPNTGGKT) is an ATP binding site. Residues 707 to 782 (LDLRGYRYEE…GFGVTVAELK (76 aa)) enclose the Smr domain.

Belongs to the DNA mismatch repair MutS family. MutS2 subfamily. In terms of assembly, homodimer. Binds to stalled ribosomes, contacting rRNA.

Functionally, endonuclease that is involved in the suppression of homologous recombination and thus may have a key role in the control of bacterial genetic diversity. Its function is as follows. Acts as a ribosome collision sensor, splitting the ribosome into its 2 subunits. Detects stalled/collided 70S ribosomes which it binds and splits by an ATP-hydrolysis driven conformational change. Acts upstream of the ribosome quality control system (RQC), a ribosome-associated complex that mediates the extraction of incompletely synthesized nascent chains from stalled ribosomes and their subsequent degradation. Probably generates substrates for RQC. The polypeptide is Endonuclease MutS2 (Staphylococcus epidermidis (strain ATCC 12228 / FDA PCI 1200)).